Consider the following 507-residue polypeptide: Germ cell nuclear acidic protein (507 aa).

The span at 1–51 (MDSGSSSSSSSSGSSSGSCSTSGSGSTSGSSTTSSSSSSSSSSSSSSSSSS) shows a compositional bias: low complexity. Residues 1-507 (MDSGSSSSSS…GRGRGAKAGK (507 aa)) form a disordered region. Short sequence motifs (SUMO interaction motif 1 (SIM)) lie at residues 12–15 (SGSS), 66–69 (CVVI), 86–89 (VCEI), and 108–111 (LIVI). Basic and acidic residues-rich tracts occupy residues 122–141 (KNTKQKSDEPQMSVLEKEGV), 179–354 (SEAK…KGEM), and 431–449 (PQDRADPQDLADPQDRGDS). A compositionally biased stretch (basic residues) spans 480–507 (GRGRGRGRGRGRGRGRGRGRGRGAKAGK).

Belongs to the serine-aspartate repeat-containing protein (SDr) family. Interacts (via SIM domains) with SUMO2; this interaction allows the GCNA recruitment to DPCs sites. Interacts with TOP2A; this interaction allows the resolution of topoisomerase II (TOP2A) DNA-protein cross-links. In terms of tissue distribution, germ-cells specific.

Its subcellular location is the chromosome. The protein localises to the nucleus. It localises to the PML body. In terms of biological role, may play a role in DNA-protein cross-links (DPCs) clearance through a SUMO-dependent recruitment to sites of DPCs, ensuring the genomic stability by protecting germ cells and early embryos from various sources of damage. Can resolve the topoisomerase II (TOP2A) DPCs. The chain is Germ cell nuclear acidic protein from Mus musculus (Mouse).